A 326-amino-acid polypeptide reads, in one-letter code: Mitochondrial glycine transporter (326 aa).

Solcar repeat units follow at residues 45–134 (HPVI…SKQY), 141–225 (PTAL…TRAT), and 237–321 (LMPL…MMAK). 6 helical membrane passes run 51-76 (FLCG…TRLQ), 109-135 (GMSP…KQYF), 147-172 (VILG…TRYE), 200-223 (GLTA…SQTR), 241-267 (VNFS…KTHM), and 296-314 (GSVP…AWTV).

Belongs to the mitochondrial carrier (TC 2.A.29) family. SLC25A38 subfamily.

It is found in the mitochondrion inner membrane. It carries out the reaction glycine(in) = glycine(out). Functionally, mitochondrial glycine transporter that imports glycine into the mitochondrial matrix. Plays an important role in providing glycine for the first enzymatic step in heme biosynthesis, the condensation of glycine with succinyl-CoA to produce 5-aminolevulinate (ALA) in the mitochondrial matrix. Required during erythropoiesis. Its function is as follows. Plays a role as pro-apoptotic protein that induces caspase-dependent apoptosis. The polypeptide is Mitochondrial glycine transporter (Rattus norvegicus (Rat)).